The primary structure comprises 291 residues: tRNA-uridine aminocarboxypropyltransferase 1 (291 aa).

The interval 158–181 (KNSAYEPSSKRPKFSPENDKNTYE) is disordered. Over residues 171–181 (FSPENDKNTYE) the composition is skewed to basic and acidic residues. The short motif at 199 to 202 (DSTW) is the DXTW element.

It belongs to the TDD superfamily. DTWD1 family.

It localises to the nucleus. It catalyses the reaction a uridine in tRNA + S-adenosyl-L-methionine = a 3-[(3S)-3-amino-3-carboxypropyl]uridine in tRNA + S-methyl-5'-thioadenosine + H(+). Catalyzes the formation of 3-(3-amino-3-carboxypropyl)uridine (acp3U) at position 20 in the D-loop of several cytoplasmic tRNAs (acp3U(20)). The sequence is that of tRNA-uridine aminocarboxypropyltransferase 1 from Xenopus laevis (African clawed frog).